We begin with the raw amino-acid sequence, 123 residues long: Small ribosomal subunit protein uS13 (123 aa).

A disordered region spans residues 103-123 (TRTNARTRKGPKKTVGVRRKK). Residues 105–123 (TNARTRKGPKKTVGVRRKK) show a composition bias toward basic residues.

It belongs to the universal ribosomal protein uS13 family. In terms of assembly, part of the 30S ribosomal subunit. Forms a loose heterodimer with protein S19. Forms two bridges to the 50S subunit in the 70S ribosome.

In terms of biological role, located at the top of the head of the 30S subunit, it contacts several helices of the 16S rRNA. In the 70S ribosome it contacts the 23S rRNA (bridge B1a) and protein L5 of the 50S subunit (bridge B1b), connecting the 2 subunits; these bridges are implicated in subunit movement. Contacts the tRNAs in the A and P-sites. This chain is Small ribosomal subunit protein uS13, found in Desulforudis audaxviator (strain MP104C).